A 524-amino-acid polypeptide reads, in one-letter code: MDSLMLAYLFPISVASIIAFVFLYNLFSSRTLKNKKIRTAPMATGAWPVLGHLHLFGSGELPHKMLAAMADKYGSAFRMKFGKHTTLVVSDTRIVKECFTTNDTLFSNRPSTKAFQLMTYDNESVAFTPYGSYWREIRKISTLKLLSNHRLQAIKDVRASEVNVCFKTLYDQCKNPSGSAPILIDMKKWFEEVSNNVVMRVIVGRQNFGSKIVQGEEEAIHYKKVMDELLRLASLSMFSDFAPLLGFVDIFQGNLSAMKRNAKKVDAILENWLEEHRKKKNSVAESQQDFMDVMLSIVEESKLSGHDADAVIKATCLAMIMGGTDTTAVSLTWIISLLMNNRHALKKAREELDALVGKDRQVEDSDLKNLVYMNAIVKETMRMYPLGTLLERETKEDCEIDGFHVKGGTRLLVNVWKLQRDPNVWVDPTEFRPERFLTENADIDVGGQHFELLPFGAGRRVCPGVXFALQFMHLVLARLIHGYDLNTLNEENVDLTESPEGHVNHKASPLDLILTPRLHYKLYE.

The next 3 helical transmembrane spans lie at 4–24, 232–252, and 319–339; these read LMLA…VFLY, LASL…DIFQ, and MIMG…SLLM. A heme-binding site is contributed by Cys462.

This sequence belongs to the cytochrome P450 family. It depends on heme as a cofactor.

The protein resides in the endoplasmic reticulum membrane. The enzyme catalyses protopine + reduced [NADPH--hemoprotein reductase] + O2 = 6-hydroxyprotopine + oxidized [NADPH--hemoprotein reductase] + H2O + H(+). Its pathway is alkaloid biosynthesis. Catalyzes the conversion of protopine and allocryptopine to dihydrosanguinarine and dihydrochelerythrine, respectively, in the biosynthesis of isoquinoline alkaloid sanguinarine. The protein is Protopine 6-monooxygenase (CYP82N2v2) of Eschscholzia californica (California poppy).